Here is a 582-residue protein sequence, read N- to C-terminus: PTS system lactose-specific EIICB component (582 aa).

The PTS EIIC type-3 domain maps to 8-409; the sequence is IEKGKPFFEK…VVDVIIYYPF (402 aa). Transmembrane regions (helical) follow at residues 30–50, 64–84, 103–123, 137–157, 176–196, 222–242, 283–303, 339–359, and 381–401; these read GFIAAIPIILFSSIFILITYV, GILMKPYNYTMGIVGLLVAGT, INFISTMMAAICGFLFLAADP, KGLLTAFISAFITVIVYNFFV, VFKDIFPLSAVILILYALDLL, GWIGVTLIFGAFAFFWFVGIH, FVATMGGTGATLVVPFMFMWL, VFFIPFIFAPIVNIWIFKFFV, and IVMGTGFAFWSFVLAILLIVV. Positions 453-473 are disordered; that stretch reads ASEADTDDTSSVDETTSTSST. Residues 464–473 show a composition bias toward low complexity; that stretch reads VDETTSTSST. Residues 479–582 form the PTS EIIB type-3 domain; the sequence is QTNVLVLCAG…LEFVKQQFNN (104 aa). C486 acts as the Phosphocysteine intermediate; for EIIB activity in catalysis. The residue at position 486 (C486) is a Phosphocysteine; by EIIA.

The protein resides in the cell membrane. It catalyses the reaction lactose(out) + N(pros)-phospho-L-histidyl-[protein] = lactose 6-phosphate(in) + L-histidyl-[protein]. The phosphoenolpyruvate-dependent sugar phosphotransferase system (sugar PTS), a major carbohydrate active transport system, catalyzes the phosphorylation of incoming sugar substrates concomitantly with their translocation across the cell membrane. The enzyme II LacEF PTS system is involved in lactose transport. The sequence is that of PTS system lactose-specific EIICB component from Staphylococcus epidermidis (strain ATCC 35984 / DSM 28319 / BCRC 17069 / CCUG 31568 / BM 3577 / RP62A).